Reading from the N-terminus, the 786-residue chain is Polyribonucleotide nucleotidyltransferase (786 aa).

Mg(2+) is bound by residues D516 and D522. Residues P582–V641 enclose the KH domain. The region spanning G653–V722 is the S1 motif domain. The disordered stretch occupies residues V722–S786. Low complexity predominate over residues A727–R738. Residues P739–R778 show a composition bias toward basic and acidic residues.

It belongs to the polyribonucleotide nucleotidyltransferase family. Mg(2+) is required as a cofactor.

It is found in the cytoplasm. The catalysed reaction is RNA(n+1) + phosphate = RNA(n) + a ribonucleoside 5'-diphosphate. Involved in mRNA degradation. Catalyzes the phosphorolysis of single-stranded polyribonucleotides processively in the 3'- to 5'-direction. This Salinispora arenicola (strain CNS-205) protein is Polyribonucleotide nucleotidyltransferase.